A 263-amino-acid polypeptide reads, in one-letter code: Putative hydro-lyase BPUM_0381 (263 aa).

This sequence belongs to the D-glutamate cyclase family.

This Bacillus pumilus (strain SAFR-032) protein is Putative hydro-lyase BPUM_0381.